A 122-amino-acid chain; its full sequence is Large ribosomal subunit protein uL14 (122 aa).

Belongs to the universal ribosomal protein uL14 family. Part of the 50S ribosomal subunit. Forms a cluster with proteins L3 and L19. In the 70S ribosome, L14 and L19 interact and together make contacts with the 16S rRNA in bridges B5 and B8.

Functionally, binds to 23S rRNA. Forms part of two intersubunit bridges in the 70S ribosome. The sequence is that of Large ribosomal subunit protein uL14 from Geobacillus kaustophilus (strain HTA426).